Here is a 248-residue protein sequence, read N- to C-terminus: Methionine aminopeptidase (248 aa).

Histidine 77 serves as a coordination point for substrate. Residues aspartate 94, aspartate 105, and histidine 169 each coordinate a divalent metal cation. Position 176 (histidine 176) interacts with substrate. Residues glutamate 202 and glutamate 233 each contribute to the a divalent metal cation site.

Belongs to the peptidase M24A family. Methionine aminopeptidase type 1 subfamily. Monomer. Co(2+) is required as a cofactor. Requires Zn(2+) as cofactor. It depends on Mn(2+) as a cofactor. The cofactor is Fe(2+).

It catalyses the reaction Release of N-terminal amino acids, preferentially methionine, from peptides and arylamides.. In terms of biological role, removes the N-terminal methionine from nascent proteins. The N-terminal methionine is often cleaved when the second residue in the primary sequence is small and uncharged (Met-Ala-, Cys, Gly, Pro, Ser, Thr, or Val). Requires deformylation of the N(alpha)-formylated initiator methionine before it can be hydrolyzed. The protein is Methionine aminopeptidase of Mycoplasma genitalium (strain ATCC 33530 / DSM 19775 / NCTC 10195 / G37) (Mycoplasmoides genitalium).